Consider the following 321-residue polypeptide: MASPGSSAPGGVAVVGSGLIGRSWAMLFASAGFRVKLFDIEPRQVTDALVSLRKEMKMLELSGYLKGELGAEEQLSLISGCSDLREAVEGALHVQECVPENLELKRKLFAQLDKIADDHVILSSSSSCLLPSKLFAGLAHVKQCLVAHPVNPPYYVPLVELVPHPETAPATVDRTYALMRRVGQSPVRLLREIDGFALNRLQYAVIAEAWRLVEEGVVSPGDLDLVMSDGLGLRYAFIGPLETMHLNAEGMLSYCDRYGEGMKRVLKTFGPVPEFSGATAEKVHQAMCVKVPDDAEHLAARRAWRDGCLMRLAQLKHQLPQ.

Serine 6 is modified (phosphoserine). NAD(+)-binding positions include 19–20, aspartate 39, glutamate 100, and lysine 105; that span reads LI.

It belongs to the 3-hydroxyacyl-CoA dehydrogenase family. Homodimer.

It is found in the cytoplasm. The catalysed reaction is L-gulonate + NAD(+) = 3-dehydro-L-gulonate + NADH + H(+). Its activity is regulated as follows. Inhibited by malonate. Its function is as follows. Has high L-gulonate 3-dehydrogenase activity. It also exhibits low dehydrogenase activity toward L-3-hydroxybutyrate (HBA) and L-threonate. This is Lambda-crystallin homolog (CRYL1) from Bos taurus (Bovine).